Here is a 244-residue protein sequence, read N- to C-terminus: Methylthioribulose-1-phosphate dehydratase (244 aa).

Cys104 contributes to the substrate binding site. His122 and His124 together coordinate Zn(2+). Glu148 serves as the catalytic Proton donor/acceptor. Residue His204 participates in Zn(2+) binding.

The protein belongs to the aldolase class II family. MtnB subfamily. Requires Zn(2+) as cofactor.

It is found in the cytoplasm. It carries out the reaction 5-(methylsulfanyl)-D-ribulose 1-phosphate = 5-methylsulfanyl-2,3-dioxopentyl phosphate + H2O. It functions in the pathway amino-acid biosynthesis; L-methionine biosynthesis via salvage pathway; L-methionine from S-methyl-5-thio-alpha-D-ribose 1-phosphate: step 2/6. Functionally, catalyzes the dehydration of methylthioribulose-1-phosphate (MTRu-1-P) into 2,3-diketo-5-methylthiopentyl-1-phosphate (DK-MTP-1-P). In Cryptococcus neoformans var. neoformans serotype D (strain B-3501A) (Filobasidiella neoformans), this protein is Methylthioribulose-1-phosphate dehydratase.